Consider the following 262-residue polypeptide: ATP synthase subunit a (262 aa).

5 helical membrane passes run 26–46 (VHID…FVFS), 86–106 (VAPL…IDLI), 130–150 (DISA…FYTI), 204–226 (LIFI…GIPL), and 240–260 (LQAF…YNKA).

It belongs to the ATPase A chain family. F-type ATPases have 2 components, CF(1) - the catalytic core - and CF(0) - the membrane proton channel. CF(1) has five subunits: alpha(3), beta(3), gamma(1), delta(1), epsilon(1). CF(0) has three main subunits: a(1), b(2) and c(9-12). The alpha and beta chains form an alternating ring which encloses part of the gamma chain. CF(1) is attached to CF(0) by a central stalk formed by the gamma and epsilon chains, while a peripheral stalk is formed by the delta and b chains.

Its subcellular location is the cell inner membrane. Its function is as follows. Key component of the proton channel; it plays a direct role in the translocation of protons across the membrane. The polypeptide is ATP synthase subunit a (Haemophilus influenzae (strain PittEE)).